Consider the following 940-residue polypeptide: Alanine--tRNA ligase (940 aa).

His581, His585, Cys683, and His687 together coordinate Zn(2+).

This sequence belongs to the class-II aminoacyl-tRNA synthetase family. It depends on Zn(2+) as a cofactor.

It localises to the cytoplasm. It catalyses the reaction tRNA(Ala) + L-alanine + ATP = L-alanyl-tRNA(Ala) + AMP + diphosphate. Catalyzes the attachment of alanine to tRNA(Ala) in a two-step reaction: alanine is first activated by ATP to form Ala-AMP and then transferred to the acceptor end of tRNA(Ala). Also edits incorrectly charged Ser-tRNA(Ala) and Gly-tRNA(Ala) via its editing domain. This Leptospira borgpetersenii serovar Hardjo-bovis (strain L550) protein is Alanine--tRNA ligase.